Reading from the N-terminus, the 154-residue chain is 17.8 kDa class I heat shock protein (154 aa).

A sHSP domain is found at Glu40–Gly154.

It belongs to the small heat shock protein (HSP20) family. Forms oligomeric structures.

The protein localises to the cytoplasm. This Solanum lycopersicum (Tomato) protein is 17.8 kDa class I heat shock protein.